Consider the following 123-residue polypeptide: Small ribosomal subunit protein uS12 (123 aa).

The residue at position 89 (Asp89) is a 3-methylthioaspartic acid.

The protein belongs to the universal ribosomal protein uS12 family. As to quaternary structure, part of the 30S ribosomal subunit. Contacts proteins S8 and S17. May interact with IF1 in the 30S initiation complex.

In terms of biological role, with S4 and S5 plays an important role in translational accuracy. Its function is as follows. Interacts with and stabilizes bases of the 16S rRNA that are involved in tRNA selection in the A site and with the mRNA backbone. Located at the interface of the 30S and 50S subunits, it traverses the body of the 30S subunit contacting proteins on the other side and probably holding the rRNA structure together. The combined cluster of proteins S8, S12 and S17 appears to hold together the shoulder and platform of the 30S subunit. The protein is Small ribosomal subunit protein uS12 of Bartonella tribocorum (strain CIP 105476 / IBS 506).